Consider the following 93-residue polypeptide: MDAKVVAVLALVLAALCISDGKPVSLSYRCPCRFFESHIARANVKHLKILNTPNCALQIVARLKNNNRQVCIDPKLKWIQEYLEKALNKRLKM.

Residues 1–21 (MDAKVVAVLALVLAALCISDG) form the signal peptide. The short motif at 22-23 (KP) is the Receptor activation motif element. Residues 29-33 (RCPCR) are receptor and heparin binding. Intrachain disulfides connect Cys-30–Cys-55 and Cys-32–Cys-71. Receptor binding stretches follow at residues 39 to 41 (IAR), 48 to 50 (KIL), and 60 to 70 (VARLKNNNRQV). Heparin contacts are provided by residues 41–51 (RANVKHLKILN), Arg-62, Gln-69, and Lys-85.

It belongs to the intercrine alpha (chemokine CxC) family. As to quaternary structure, monomer or homodimer; in equilibrium. Dimer formation is induced by non acidic pH and the presence of multivalent anions, and by binding to CXCR4 or heparin. Monomeric form is required for full chemotactic activity and resistance to ischemia/reperfusion injury, whereas the dimeric form acts as a partial agonist of CXCR4, stimulating Ca2+ mobilization but with no chemotactic activity and instead acts as a selective antagonist that blocks chemotaxis induced by the monomeric form. Interacts with the N-terminus of ACKR3. Interacts with integrin subunit ITGB3 (via the allosteric site (site 2)). Interacts with TNFAIP6 (via Link domain). Highest expression levels detected in kidney, liver, spleen and muscle. Isoform Alpha is expressed ubiquitously but at varying levels, while isoform Beta displays tissue-specific expression, with expression detected in kidney, liver, heart, spleen and muscle but not in lung, colon, brain, skin and stomach.

It is found in the secreted. Functionally, chemoattractant active on T-lymphocytes and monocytes but not neutrophils. Activates the C-X-C chemokine receptor CXCR4 to induce a rapid and transient rise in the level of intracellular calcium ions and chemotaxis. Also binds to atypical chemokine receptor ACKR3, which activates the beta-arrestin pathway and acts as a scavenger receptor for SDF-1. Binds to the allosteric site (site 2) of integrins and activates integrins ITGAV:ITGB3, ITGA4:ITGB1 and ITGA5:ITGB1 in a CXCR4-independent manner. Acts as a positive regulator of monocyte migration and a negative regulator of monocyte adhesion via the LYN kinase. Stimulates migration of monocytes and T-lymphocytes through its receptors, CXCR4 and ACKR3, and decreases monocyte adherence to surfaces coated with ICAM-1, a ligand for beta-2 integrins. SDF1A/CXCR4 signaling axis inhibits beta-2 integrin LFA-1 mediated adhesion of monocytes to ICAM-1 through LYN kinase. Plays a protective role after myocardial infarction. Induces down-regulation and internalization of ACKR3 expressed in various cells. Has several critical functions during embryonic development; required for B-cell lymphopoiesis, myelopoiesis in bone marrow and heart ventricular septum formation. Stimulates the proliferation of bone marrow-derived B-cell progenitors in the presence of IL7 as well as growth of stromal cell-dependent pre-B-cells. In Mus musculus (Mouse), this protein is Stromal cell-derived factor 1 (Cxcl12).